The chain runs to 158 residues: Transcription elongation factor GreA (158 aa).

Positions 53-73 form a coiled coil; that stretch reads EQQGMVEARIRDIEAKLSNAQ.

This sequence belongs to the GreA/GreB family.

In terms of biological role, necessary for efficient RNA polymerase transcription elongation past template-encoded arresting sites. The arresting sites in DNA have the property of trapping a certain fraction of elongating RNA polymerases that pass through, resulting in locked ternary complexes. Cleavage of the nascent transcript by cleavage factors such as GreA or GreB allows the resumption of elongation from the new 3'terminus. GreA releases sequences of 2 to 3 nucleotides. The chain is Transcription elongation factor GreA from Pseudomonas aeruginosa (strain ATCC 15692 / DSM 22644 / CIP 104116 / JCM 14847 / LMG 12228 / 1C / PRS 101 / PAO1).